Reading from the N-terminus, the 281-residue chain is Protein phosphatase 2C homolog 1 (281 aa).

One can recognise a PPM-type phosphatase domain in the interval 20–281; it reads RVGVAENKNS…DNVTVMVVFL (262 aa). Aspartate 58, glycine 59, aspartate 233, and aspartate 272 together coordinate Mn(2+).

This sequence belongs to the PP2C family. In terms of assembly, interacts with NBP2 and PBS2. It depends on Mg(2+) as a cofactor. Mn(2+) serves as cofactor.

It localises to the peroxisome. The enzyme catalyses O-phospho-L-seryl-[protein] + H2O = L-seryl-[protein] + phosphate. The catalysed reaction is O-phospho-L-threonyl-[protein] + H2O = L-threonyl-[protein] + phosphate. Functionally, serine and threonine phosphatase. Involved in tRNA splicing and cell separation. This chain is Protein phosphatase 2C homolog 1 (PTC1), found in Saccharomyces cerevisiae (strain ATCC 204508 / S288c) (Baker's yeast).